The following is a 250-amino-acid chain: Aquaporin TIP2-1 (250 aa).

At Met1 the chain carries N-acetylmethionine. Residues 1 to 20 lie on the Cytoplasmic side of the membrane; the sequence is MAGVAFGSFDDSFSLASLRA. Ala2 carries the post-translational modification N-acetylalanine; in Aquaporin TIP2-1, N-terminally processed. The helical transmembrane segment at 21 to 41 threads the bilayer; it reads YLAEFISTLLFVFAGVGSAIA. Residues 42–54 lie on the Vacuolar side of the membrane; sequence YAKLTSDAALDTP. Residues 55-75 traverse the membrane as a helical segment; it reads GLVAIAVCHGFALFVAVAIGA. The Cytoplasmic segment spans residues 76–98; the sequence is NISGGHVNPAVTFGLAVGGQITV. The NPA 1 motif lies at 83–85; the sequence is NPA. Residues 99-119 form a helical membrane-spanning segment; sequence ITGVFYWIAQLLGSTAACFLL. Residues 120 to 141 are Vacuolar-facing; it reads KYVTGGLAVPTHSVAAGLGSIE. The chain crosses the membrane as a helical span at residues 142–162; that stretch reads GVVMEIIITFALVYTVYATAA. At 163 to 168 the chain is on the cytoplasmic side; that stretch reads DPKKGS. The helical transmembrane segment at 169-189 threads the bilayer; sequence LGTIAPLAIGLIVGANILAAG. Residues 190–215 are Vacuolar-facing; that stretch reads PFSGGSMNPARSFGPAVAAGDFSGHW. The short motif at 197–199 is the NPA 2 element; sequence NPA. Residues 216–236 traverse the membrane as a helical segment; sequence VYWVGPLIGGGLAGLIYGNVF. Over 237–250 the chain is Cytoplasmic; that stretch reads MGSSEHVPLASADF.

This sequence belongs to the MIP/aquaporin (TC 1.A.8) family. TIP (TC 1.A.8.10) subfamily. As to quaternary structure, interacts with cucumber mosaic virus (CMV) Protein 1a. In terms of tissue distribution, strongly expressed in shoot, rosette, bolt and flowers. Also expressed in roots, flower buds and above ground.

It is found in the vacuole membrane. Its function is as follows. Aquaporin required to facilitate the transport of water from the vacuolar compartment to the cytoplasm. Does not promote glycerol permeability. Its function is impaired by Hg(2+). Transports urea in yeast cells and Xenopus laevis oocytes in a pH-independent manner. Transports methylammonium or ammonium in yeast cells and Xenopus laevis oocytes, preferentially at high medium pH. May participate in vacuolar compartmentation and detoxification of ammonium. This is Aquaporin TIP2-1 (TIP2-1) from Arabidopsis thaliana (Mouse-ear cress).